The primary structure comprises 598 residues: Aspartate--tRNA(Asp/Asn) ligase (598 aa).

Glu177 lines the L-aspartate pocket. Residues 201–204 are aspartate; sequence QLFK. L-aspartate is bound at residue Arg223. ATP contacts are provided by residues 223 to 225 and Gln232; that span reads RDE. His456 lines the L-aspartate pocket. Glu493 serves as a coordination point for ATP. Arg500 is a binding site for L-aspartate. ATP is bound at residue 545–548; sequence GLDR.

This sequence belongs to the class-II aminoacyl-tRNA synthetase family. Type 1 subfamily. In terms of assembly, homodimer.

It localises to the cytoplasm. The catalysed reaction is tRNA(Asx) + L-aspartate + ATP = L-aspartyl-tRNA(Asx) + AMP + diphosphate. In terms of biological role, aspartyl-tRNA synthetase with relaxed tRNA specificity since it is able to aspartylate not only its cognate tRNA(Asp) but also tRNA(Asn). Reaction proceeds in two steps: L-aspartate is first activated by ATP to form Asp-AMP and then transferred to the acceptor end of tRNA(Asp/Asn). This Prochlorococcus marinus (strain MIT 9301) protein is Aspartate--tRNA(Asp/Asn) ligase.